A 369-amino-acid chain; its full sequence is Type 2 DNA topoisomerase 6 subunit A (369 aa).

Residues 10–146 (KPREIAKQKI…LGFIPEEDGS (137 aa)) enclose the Topo IIA-type catalytic domain. Tyr-103 functions as the O-(5'-phospho-DNA)-tyrosine intermediate in the catalytic mechanism. Mg(2+) contacts are provided by Glu-197 and Asp-249.

Belongs to the TOP6A family. Homodimer. Heterotetramer of two Top6A and two Top6B chains. Mg(2+) is required as a cofactor.

It catalyses the reaction ATP-dependent breakage, passage and rejoining of double-stranded DNA.. Relaxes both positive and negative superturns and exhibits a strong decatenase activity. The sequence is that of Type 2 DNA topoisomerase 6 subunit A from Methanocaldococcus jannaschii (strain ATCC 43067 / DSM 2661 / JAL-1 / JCM 10045 / NBRC 100440) (Methanococcus jannaschii).